Consider the following 43-residue polypeptide: Truncated K3L homolog (43 aa).

This sequence belongs to the orthopoxvirus OPG041 family.

This is Truncated K3L homolog (OPG041) from Cynomys gunnisoni (Gunnison's prairie dog).